Reading from the N-terminus, the 342-residue chain is Cilia- and flagella-associated protein 36 (342 aa).

Phosphoserine is present on residues Ser85 and Ser147. Positions 150–187 (EHEEMKILREVLRKSKEEYDQEEERKRKKQLSEAKTEE) form a coiled coil. The disordered stretch occupies residues 166-194 (EEYDQEEERKRKKQLSEAKTEEPTVHSSE). Residues 179 to 189 (QLSEAKTEEPT) are compositionally biased toward basic and acidic residues. Ser201 bears the Phosphoserine mark. Disordered stretches follow at residues 229-250 (RKVERSETSSLPQKDLKIPGLE) and 282-322 (KLMS…AEEK). Composition is skewed to basic and acidic residues over residues 282–292 (KLMSMRKDMRT) and 300–322 (QKGKPTGEVEEMTEKPEMTAEEK).

Belongs to the CFAP36 family. Interacts with ARL3. Expressed in several human tissues including brain, testis, heart, lung, pancreas and spleen (at protein level).

The protein resides in the nucleus. It is found in the cytoplasm. The protein localises to the cell projection. It localises to the cilium. Its subcellular location is the flagellum. In terms of biological role, may act as an effector for ARL3. This is Cilia- and flagella-associated protein 36 (CFAP36) from Homo sapiens (Human).